The chain runs to 393 residues: Ig gamma-1 chain C region, membrane-bound form (393 aa).

The tract at residues 1–97 is CH1; that stretch reads AKTTPPSVYP…ASSTKVDKKI (97 aa). Cys-27 and Cys-82 form a disulfide bridge. The tract at residues 98–110 is hinge; sequence VPRDCGCKPCICT. The CH2 stretch occupies residues 111-217; it reads VPEVSSVFIF…PIEKTISKTK (107 aa). 2 disulfide bridges follow: Cys-138-Cys-198 and Cys-244-Cys-302. N-linked (GlcNAc...) asparagine glycosylation occurs at Asn-174. The tract at residues 218-324 is CH3; it reads GRPKAPQVYT…EKSLSHSPGL (107 aa). The helical transmembrane segment at 340–357 threads the bilayer; that stretch reads GLWTTITIFISLFLLSVC. Residues 358 to 393 are Cytoplasmic-facing; the sequence is YSAAVTLFKVKWIFSSVVELKQTLVPEYKNMIGQAP.

Its subcellular location is the cell membrane. The chain is Ig gamma-1 chain C region, membrane-bound form (Ighg1) from Mus musculus (Mouse).